The sequence spans 377 residues: 4-hydroxy-3-methylbut-2-en-1-yl diphosphate synthase (flavodoxin) (377 aa).

4 residues coordinate [4Fe-4S] cluster: Cys275, Cys278, Cys310, and Glu317.

This sequence belongs to the IspG family. [4Fe-4S] cluster serves as cofactor.

The catalysed reaction is (2E)-4-hydroxy-3-methylbut-2-enyl diphosphate + oxidized [flavodoxin] + H2O + 2 H(+) = 2-C-methyl-D-erythritol 2,4-cyclic diphosphate + reduced [flavodoxin]. The protein operates within isoprenoid biosynthesis; isopentenyl diphosphate biosynthesis via DXP pathway; isopentenyl diphosphate from 1-deoxy-D-xylulose 5-phosphate: step 5/6. Its function is as follows. Converts 2C-methyl-D-erythritol 2,4-cyclodiphosphate (ME-2,4cPP) into 1-hydroxy-2-methyl-2-(E)-butenyl 4-diphosphate. In Jannaschia sp. (strain CCS1), this protein is 4-hydroxy-3-methylbut-2-en-1-yl diphosphate synthase (flavodoxin).